The chain runs to 414 residues: TAR DNA-binding protein 43 (414 aa).

Residues lysine 79, lysine 84, lysine 95, lysine 102, and lysine 181 each participate in a glycyl lysine isopeptide (Lys-Gly) (interchain with G-Cter in SUMO2) cross-link. RRM domains are found at residues 104 to 200 (SDLI…RCTE) and 191 to 262 (RKVF…NAEP). Serine 183 is subject to Phosphoserine. An interaction with UBQLN2 region spans residues 216-414 (EVVDVFIPKP…MDSKSSGWGM (199 aa)). Residues 261 to 274 (EPKHNSNRQLERSG) show a composition bias toward basic and acidic residues. 2 disordered regions span residues 261 to 301 (EPKH…GLGN) and 341 to 414 (ASQQ…GWGM). Lysine 263 participates in a covalent cross-link: Glycyl lysine isopeptide (Lys-Gly) (interchain with G-Cter in SUMO2). Positions 275–301 (RFGGNPGGFGNQGGFGNSRGGGAGLGN) are enriched in gly residues. Serine 292 carries the post-translational modification Phosphoserine. An Omega-N-methylarginine modification is found at arginine 293. Composition is skewed to low complexity over residues 342-358 (SQQNQSGPSGNNQSQGS) and 368-392 (GSGNNSYSGSNSGAPLGWGSASNAG). The span at 393-402 (SGSGFNGGFG) shows a compositional bias: gly residues. The segment covering 405–414 (MDSKSSGWGM) has biased composition (polar residues).

As to quaternary structure, homodimer. Homooligomer (via its N-terminal domain). Interacts with BRDT. Binds specifically to pyrimidine-rich motifs of TAR DNA and to single stranded TG repeated sequences. Binds to RNA, specifically to UG repeated sequences with a minimum of six contiguous repeats. Interacts with ATXN2; the interaction is RNA-dependent. Interacts with MATR3. Interacts with UBQLN2. Interacts with HNRNPA2B1. Interacts with ZNF106. Interacts with CNOT7/CAF1. Interacts with CRY2. Interacts with PPIA/CYPA; the interaction is dependent on RNA-binding activity of TARDBP and PPIase activity of PPIA/CYPA. Acetylation of PPIA/CYPA at 'Lys-125' favors the interaction of TARDBP with PPIA/CYPA. Hyperphosphorylated. In terms of processing, ubiquitinated.

It is found in the nucleus. Its subcellular location is the cytoplasm. It localises to the stress granule. The protein localises to the mitochondrion. Its function is as follows. RNA-binding protein that is involved in various steps of RNA biogenesis and processing. Preferentially binds, via its two RNA recognition motifs RRM1 and RRM2, to GU-repeats on RNA molecules predominantly localized within long introns and in the 3'UTR of mRNAs. In turn, regulates the splicing of many non-coding and protein-coding RNAs including proteins involved in neuronal survival, as well as mRNAs that encode proteins relevant for neurodegenerative diseases. Plays a role in maintaining mitochondrial homeostasis by regulating the processing of mitochondrial transcripts. Also regulates mRNA stability by recruiting CNOT7/CAF1 deadenylase on mRNA 3'UTR leading to poly(A) tail deadenylation and thus shortening. In response to oxidative insult, associates with stalled ribosomes localized to stress granules (SGs) and contributes to cell survival. Also participates in the normal skeletal muscle formation and regeneration, forming cytoplasmic myo-granules and binding mRNAs that encode sarcomeric proteins. Plays a role in the maintenance of the circadian clock periodicity via stabilization of the CRY1 and CRY2 proteins in a FBXL3-dependent manner. Negatively regulates the expression of CDK6. Regulates the expression of HDAC6, ATG7 and VCP in a PPIA/CYPA-dependent manner. The protein is TAR DNA-binding protein 43 (Tardbp) of Mus musculus (Mouse).